The sequence spans 1533 residues: Protein TALPID3 (1533 aa).

The tract at residues 32-57 (LSANKRLPVGTGTSLNGTSRGSSDLT) is disordered. The segment covering 42 to 57 (TGTSLNGTSRGSSDLT) has biased composition (polar residues). Residues 182 to 223 (QSDLEAKVNSVTELLSKLQETDKHLQRVTEQQTSIQRKQEKL) are a coiled coil. Positions 309–321 (KEVEDTSFDKQKS) are enriched in basic and acidic residues. 2 disordered regions span residues 309–339 (KEVE…VSRD) and 377–400 (LTRK…TPEK). Serine 406 is modified (phosphoserine). A coiled-coil region spans residues 467–501 (SVLKDAEKILRGVQNNKKVLEENLEAIIRAKDGAA). The required for centrosomal localization stretch occupies residues 467–554 (SVLKDAEKIL…YEQKRFDQKN (88 aa)). Residues 546–575 (EQKRFDQKNQRTKKGQNMTKDIRTNTQDKT) form a disordered region. A compositionally biased stretch (polar residues) spans 560–575 (GQNMTKDIRTNTQDKT). Phosphothreonine is present on residues threonine 1042 and threonine 1046. Position 1050 is a phosphoserine (serine 1050). Residue threonine 1063 is modified to Phosphothreonine. Serine 1066 is subject to Phosphoserine. The disordered stretch occupies residues 1129-1156 (SSPELPKPWGDGDLPLEEENPNSPQEEL).

This sequence belongs to the TALPID3 family. As to quaternary structure, interacts with CCP110, CEP290, CEP97, KIF24. Ubiquitously expressed. Expressed in photoreceptor cells (at protein level).

Its subcellular location is the cytoplasm. It localises to the cytoskeleton. It is found in the microtubule organizing center. The protein resides in the centrosome. The protein localises to the photoreceptor inner segment. Its subcellular location is the centriole. It localises to the cilium basal body. Required for ciliogenesis and sonic hedgehog/SHH signaling. Required for the centrosomal recruitment of RAB8A and for the targeting of centriole satellite proteins to centrosomes such as of PCM1. May play a role in early ciliogenesis in the disappearance of centriolar satellites that preceeds ciliary vesicle formation. Involved in regulation of cell intracellular organization. Involved in regulation of cell polarity. Required for asymmetrical localization of CEP120 to daughter centrioles. In Homo sapiens (Human), this protein is Protein TALPID3 (KIAA0586).